A 62-amino-acid chain; its full sequence is Calmodulin regulator protein PCP4 (62 aa).

The tract at residues 1–40 (MSERQGAGTTNGKDKPSGENDGQKKVQEEFDIDMDAPETE) is disordered. A compositionally biased stretch (basic and acidic residues) spans 12–28 (GKDKPSGENDGQKKVQE). Residues 28–40 (EEFDIDMDAPETE) form an acidic; binds calcium and is required for modulating the calcium-binding kinetics of calmodulin region. An IQ domain is found at 39-62 (TERAAVAIQSQFRKFQKKKAGSQS).

It belongs to the PCP4 family. Binds to both calcium-free and calcium-bound calmodulin. The affinity for the calcium-bound form is 50-fold greater.

Its function is as follows. Functions as a modulator of calcium-binding by calmodulin. Thereby, regulates calmodulin activity and the different processes it controls. For instance, may play a role in neuronal differentiation through activation of calmodulin-dependent kinase signaling pathways. The protein is Calmodulin regulator protein PCP4 of Bos taurus (Bovine).